The sequence spans 95 residues: Hge-scorpine (95 aa).

A signal peptide spans 1–19; that stretch reads MNTKLTVLCFLGIVTIVSC. Residues 55-94 enclose the BetaSPN-type CS-alpha/beta domain; that stretch reads QFGCFANVDVKGDCKRHCKAEDKEGICHGTKCKCGVPISY. 3 disulfide bridges follow: C58-C81, C68-C86, and C72-C88.

The protein belongs to the long chain scorpion toxin family. Class 3 subfamily. In terms of tissue distribution, expressed by the venom gland.

It localises to the secreted. Functionally, has antibacterial activity against B.subtilis, but not against S.aureus. Also has hemolytic and cytolytic activities. Since cell lysis occurs at the tested concentrations, observation of activity on potassium channels is impossible. Blocks Kv1.1/KCNA1 (IC(50)=185 nM) potassium channels. Shows a weak hemolytic activity. The polypeptide is Hge-scorpine (Hoffmannihadrurus gertschi (Scorpion)).